Consider the following 119-residue polypeptide: Ribonuclease P protein component (119 aa).

This sequence belongs to the RnpA family. In terms of assembly, consists of a catalytic RNA component (M1 or rnpB) and a protein subunit.

It catalyses the reaction Endonucleolytic cleavage of RNA, removing 5'-extranucleotides from tRNA precursor.. Its function is as follows. RNaseP catalyzes the removal of the 5'-leader sequence from pre-tRNA to produce the mature 5'-terminus. It can also cleave other RNA substrates such as 4.5S RNA. The protein component plays an auxiliary but essential role in vivo by binding to the 5'-leader sequence and broadening the substrate specificity of the ribozyme. This is Ribonuclease P protein component from Aeromonas hydrophila subsp. hydrophila (strain ATCC 7966 / DSM 30187 / BCRC 13018 / CCUG 14551 / JCM 1027 / KCTC 2358 / NCIMB 9240 / NCTC 8049).